The following is a 319-amino-acid chain: L-lactate dehydrogenase 2 (319 aa).

NAD(+) contacts are provided by residues valine 17, aspartate 38, lysine 43, tyrosine 69, and 83–84 (GA). Substrate is bound by residues glutamine 86 and arginine 92. Residues serine 105, 122–124 (ATN), and serine 147 each bind NAD(+). 124–127 (NPVD) provides a ligand contact to substrate. 152–155 (DSGR) serves as a coordination point for substrate. Beta-D-fructose 1,6-bisphosphate is bound by residues arginine 157 and histidine 172. The active-site Proton acceptor is the histidine 179. Tyrosine 224 is modified (phosphotyrosine). A substrate-binding site is contributed by threonine 233.

This sequence belongs to the LDH/MDH superfamily. LDH family. In terms of assembly, homotetramer.

The protein resides in the cytoplasm. The catalysed reaction is (S)-lactate + NAD(+) = pyruvate + NADH + H(+). It functions in the pathway fermentation; pyruvate fermentation to lactate; (S)-lactate from pyruvate: step 1/1. Allosterically activated by fructose 1,6-bisphosphate (FBP). Its function is as follows. Catalyzes the conversion of lactate to pyruvate. The protein is L-lactate dehydrogenase 2 of Peribacillus psychrosaccharolyticus (Bacillus psychrosaccharolyticus).